Here is an 88-residue protein sequence, read N- to C-terminus: Small ribosomal subunit protein bS20 (88 aa).

Residues 1–27 (MANSKSAKKRALQSEKRRQHNASRRSM) are disordered.

This sequence belongs to the bacterial ribosomal protein bS20 family.

Functionally, binds directly to 16S ribosomal RNA. This chain is Small ribosomal subunit protein bS20, found in Shewanella woodyi (strain ATCC 51908 / MS32).